The sequence spans 492 residues: MSCISSQCFITIKSICIVLLLSITCGAVSANSNYGEALTKSLLYFEAQRSGKLPLDQRVIWRGDSALRDGSDAHVDLTGGYYDAGDNMKFGFPLAFTTTMLAWSSVEMESQLKAHQEHGNTLAALRWATDYLIKAHPEPNVLYGQVGDANLDHACWMRPEDMTTPRPSYRIDPQHPGADLAGETAAAMAAASLAFAPSDSAYAKTLISHAKELFEFAKDYPGVYHNSIPNAGGFYPSSGYEDELLWAAAWLHRATGDQTYLDHLTQASNSGGARSVFAWDDKFLGAQVLVAKLVFEGKVKNEGKMIEYKSMAEQFICNCAQKGFNNVKKTPGGLLWFLPWDNLQYTATASFALATYAKYLEAAQTSIQCPNGDVLQASDLLNLARAQVDYILGSNPKKMSYMVGYGTNYPKRPHHRGASIVSIKNDPKPVTCNGGFEAWYNNPKPNPNLLVGAIVGGPDEYDAYGDERSDFQHGEPDTVTVAPLLGVLAAIA.

Residues Met1 to Ala30 form the signal peptide. The active-site Nucleophile is the Asp86. Catalysis depends on residues His414, Asp466, and Glu475.

Belongs to the glycosyl hydrolase 9 (cellulase E) family.

The protein localises to the secreted. The enzyme catalyses Endohydrolysis of (1-&gt;4)-beta-D-glucosidic linkages in cellulose, lichenin and cereal beta-D-glucans.. The protein is Endoglucanase 15 of Arabidopsis thaliana (Mouse-ear cress).